Reading from the N-terminus, the 335-residue chain is Expansin-like protein 3 (335 aa).

The first 20 residues, 1 to 20 (MKFNTIFLVLSIVKFILISA), serve as a signal peptide directing secretion. Residues 21–314 (QSCPFSQSII…LNENENIESN (294 aa)) are Extracellular-facing. The 101-residue stretch at 43–143 (AGNCGFEKLN…VKVPCEVSGN (101 aa)) folds into the Expansin-like EG45 domain. 2 disulfides stabilise this stretch: Cys46-Cys76 and Cys79-Cys138. N-linked (GlcNAc...) asparagine glycosylation occurs at Asn87. A disordered region spans residues 247 to 276 (YKPQTFNSQQTSNNQNSNTQTPTKQPSPNS). Positions 249–272 (PQTFNSQQTSNNQNSNTQTPTKQP) are enriched in low complexity. Residues 315 to 335 (SLKLLPNFLLLILIILLNINF) form a helical membrane-spanning segment.

The protein belongs to the expansin family. Expansin A subfamily.

The protein localises to the membrane. In terms of biological role, may serve to lubricate the movement of the cellulose microfibrils during cell growth and wall extension and/or may serve to maintain the fluid state of the slug cell wall. In Dictyostelium discoideum (Social amoeba), this protein is Expansin-like protein 3 (expl3).